The chain runs to 307 residues: Probable aspartoacylase (307 aa).

Residues H13 and E16 each contribute to the Zn(2+) site. Substrate is bound by residues R55 and 62 to 63 (NR). Position 105 (H105) interacts with Zn(2+). Substrate contacts are provided by E163 and Y276.

It belongs to the AspA/AstE family. Aspartoacylase subfamily. It depends on Zn(2+) as a cofactor.

The enzyme catalyses an N-acyl-L-aspartate + H2O = a carboxylate + L-aspartate. This chain is Probable aspartoacylase, found in Prochlorococcus marinus (strain SARG / CCMP1375 / SS120).